The chain runs to 189 residues: Interferon alpha-6 (189 aa).

A signal peptide spans 1–20 (MALPFALLMALVVLSCKSSC). Intrachain disulfides connect Cys24–Cys122 and Cys52–Cys162.

The protein belongs to the alpha/beta interferon family.

It localises to the secreted. In terms of biological role, produced by macrophages, IFN-alpha have antiviral activities. Interferon stimulates the production of two enzymes: a protein kinase and an oligoadenylate synthetase. The polypeptide is Interferon alpha-6 (IFNA6) (Homo sapiens (Human)).